The following is a 215-amino-acid chain: UPF0502 protein PputGB1_3531 (215 aa).

Belongs to the UPF0502 family.

The protein is UPF0502 protein PputGB1_3531 of Pseudomonas putida (strain GB-1).